The following is a 23-amino-acid chain: GLWQKIKSAAGDLASGIVEAIKS.

Expressed by the skin parotoid and/or rostral glands.

The protein localises to the secreted. Functionally, antibacterial peptide, that adopts an alpha helical conformation which can disrupt bacterial membranes. Each caerin displays a different antimicrobial specificity. The chain is Caerin-4.2 from Ranoidea caerulea (Green tree frog).